The sequence spans 1010 residues: Collagen, type I, alpha 1b (1010 aa).

A compositionally biased stretch (pro residues) spans 1–24 (SSGPPQPGPMGPMGPRGPPGPPGS). Positions 1–969 (SSGPPQPGPM…PDGTQKSPAR (969 aa)) are disordered. Residues 25-48 (SGPQGFTGPPGEPGEPGASGAMGS) are compositionally biased toward low complexity. Residues 58-72 (NGDDGEPGKPGRPGE) are compositionally biased toward basic and acidic residues. Low complexity predominate over residues 73–82 (RGAAGPQGAR). Residues 145–159 (GGPPGPTGPAGPPGF) are compositionally biased toward pro residues. 2 stretches are compositionally biased toward gly residues: residues 160 to 179 (PGGA…GNEG) and 203 to 212 (GTDGGPGAKG). Low complexity-rich tracts occupy residues 213–268 (SPGA…PGPA) and 300–310 (ERGAPGARGFP). Over residues 311 to 323 (GADGGAGGKGAPG) the composition is skewed to gly residues. Low complexity-rich tracts occupy residues 324–343 (ERGA…PGSK) and 405–448 (PAGA…APGE). Composition is skewed to gly residues over residues 468–477 (GAPGLGGPTG), 486–495 (GAPGGLGAPG), and 519–528 (GGKGGDGAPG). 2 stretches are compositionally biased toward low complexity: residues 559–568 (VAGPTGPRGA) and 581–596 (AGFA…PGAK). 2 stretches are compositionally biased toward gly residues: residues 609 to 618 (GAPGPGGPVG) and 633 to 642 (GARGGAGPPG). Composition is skewed to low complexity over residues 643 to 662 (ATGF…AGAA), 679 to 701 (ETGA…SGEK), and 796 to 805 (APGAVGPSGK). Residues 834-847 (KGDRGEAGEAGDRG) are compositionally biased toward basic and acidic residues. Over residues 872 to 900 (PAGASGPAGPRGPAGSNGAAGKDGMNGLP) the composition is skewed to low complexity. The segment covering 918–933 (AGPPGPPGPAGPPGPP) has biased composition (pro residues). The Fibrillar collagen NC1 domain maps to 982-1010 (RLPLLDLAPMDVGAPDQEFGVEVGPVCFL).

The protein belongs to the fibrillar collagen family.

Its subcellular location is the secreted. It localises to the extracellular space. The protein localises to the extracellular matrix. The protein is Collagen, type I, alpha 1b of Epinephelus marginatus (Dusky grouper).